The following is a 311-amino-acid chain: GTP cyclohydrolase FolE2 (311 aa).

Belongs to the GTP cyclohydrolase IV family.

The catalysed reaction is GTP + H2O = 7,8-dihydroneopterin 3'-triphosphate + formate + H(+). It functions in the pathway cofactor biosynthesis; 7,8-dihydroneopterin triphosphate biosynthesis; 7,8-dihydroneopterin triphosphate from GTP: step 1/1. Converts GTP to 7,8-dihydroneopterin triphosphate. The chain is GTP cyclohydrolase FolE2 from Xanthomonas campestris pv. campestris (strain B100).